The sequence spans 506 residues: MSFSVDVLAGIAIELQSGIGHQDRFQRLITTLRQVLECDASALLRYEGRQFIPLAIDGLAQDVLGRRFTLEGHPRLEAIARAGDVVRFPADSDLPDPYDGLIPDQESLKVHACIGLPLFAGQTLIGALTLDGMEPDQFDVFSDEELRLIAALAAGALSNALLIEQLESQNMLPGSSASFEQVKETQMIGLSPNMMQLKKEIEIVAGSDLNVLISGETGTGKELVAKAIHEGSPRAVNPLVYLNCAALPESVAESELFGHVKGAFTGAISNRSGKFEMADNGTLFLDEIGELSLALQAKLLRVLQYGDIQRVGDDRSLRVDVRVLAATNRDLREEVLAGRFRADLFHRLSVFPLSVPPLRERGEDVVLLAGYFCEQCRLRLGLSRVVLSPGARSHLLSYGWPGNVRELEHAIHRAVVLARATRAGDEVVLEAQHFALQEEVSPALPDDSTPTLPANHNLRDATEAFQREMIRRALAQNNHNWAACARALETDVANLHRLAKRLGLKS.

Aspartate 57 bears the 4-aspartylphosphate mark. The Sigma-54 factor interaction domain occupies methionine 187–valine 416. ATP is bound by residues glycine 215–glutamate 222 and alanine 278–glutamate 287. The segment at residues tryptophan 481–lysine 500 is a DNA-binding region (H-T-H motif).

It functions in the pathway nitrogen metabolism; nitric oxide reduction. Functionally, required for the expression of anaerobic nitric oxide (NO) reductase, acts as a transcriptional activator for at least the norVW operon. Activation also requires sigma-54. In Citrobacter koseri (strain ATCC BAA-895 / CDC 4225-83 / SGSC4696), this protein is Anaerobic nitric oxide reductase transcription regulator NorR.